Reading from the N-terminus, the 301-residue chain is MSMSHINYNHLYYFWHVYKEGSVVGAAEALYLTPQTITGQIRALEERLQGKLFKRKGRGLEPSELGELVYRYADKMFTLSQEMLDIVNYRKESNLLFDVGVADALSKRLVSSVLNAAVVEGEPIHLRCFESTHEMLLEQLSQHKLDMIISDCPIDSTQQEGLFSVRIGECGVSFWCTNPPPEKPFPACLEERRLLIPGRRSMLGRKLLNWFNSQGLNVEILGEFDDAALMKAFGAMHNAIFVAPTLYAYDFYADKTVVEIGRVENVMEEYHAIFAERMIQHPAVQRICNTDYSALFSPAVR.

Residues 6 to 63 (INYNHLYYFWHVYKEGSVVGAAEALYLTPQTITGQIRALEERLQGKLFKRKGRGLEPS) form the HTH lysR-type domain. Positions 23-42 (VVGAAEALYLTPQTITGQIR) form a DNA-binding region, H-T-H motif.

The protein belongs to the LysR transcriptional regulatory family.

It is found in the cytoplasm. In terms of biological role, plays a role in the positive regulation of NhaA. The polypeptide is Transcriptional activator protein NhaR (nhaR) (Escherichia coli (strain K12)).